Consider the following 295-residue polypeptide: Probable lipid kinase YegS-like (295 aa).

The DAGKc domain maps to 1 to 129 (MQGRKAMLVL…IDLGQAGDQL (129 aa)). Residues T39, 65–71 (GDGTLRD), and T92 contribute to the ATP site. Mg(2+) contacts are provided by M210, D213, and L215. E264 functions as the Proton acceptor in the catalytic mechanism.

The protein belongs to the diacylglycerol/lipid kinase family. YegS lipid kinase subfamily. The cofactor is Mg(2+). Requires Ca(2+) as cofactor.

Its subcellular location is the cytoplasm. Probably phosphorylates lipids; the in vivo substrate is unknown. The chain is Probable lipid kinase YegS-like from Pseudomonas putida (strain ATCC 47054 / DSM 6125 / CFBP 8728 / NCIMB 11950 / KT2440).